A 323-amino-acid chain; its full sequence is Ferrochelatase (323 aa).

2 residues coordinate Fe cation: His196 and Glu277.

Belongs to the ferrochelatase family.

It is found in the cytoplasm. It catalyses the reaction heme b + 2 H(+) = protoporphyrin IX + Fe(2+). Its pathway is porphyrin-containing compound metabolism; protoheme biosynthesis; protoheme from protoporphyrin-IX: step 1/1. Functionally, catalyzes the ferrous insertion into protoporphyrin IX. The chain is Ferrochelatase from Haemophilus influenzae (strain 86-028NP).